We begin with the raw amino-acid sequence, 189 residues long: GTPase HRas (189 aa).

An N-acetylmethionine modification is found at Met1. At Thr2 the chain carries N-acetylthreonine; in GTPase HRas, N-terminally processed. 10-17 (GAGGVGKS) contacts GTP. An Effector region motif is present at residues 32–40 (YDPTIEDSY). Residues 57 to 61 (DTAGQ) and 116 to 119 (NKCD) each bind GTP. Cys118 is subject to S-nitrosocysteine. Positions 166–185 (HKLRKLNPPDESGPGCMNCK) are hypervariable region. Residues Cys181 and Cys184 are each lipidated (S-palmitoyl cysteine). Cys186 is modified (cysteine methyl ester). The S-farnesyl cysteine moiety is linked to residue Cys186. Residues 187-189 (VIS) constitute a propeptide, removed in mature form.

It belongs to the small GTPase superfamily. Ras family. Post-translationally, palmitoylated by the ZDHHC9-GOLGA7 complex. A continuous cycle of de- and re-palmitoylation regulates rapid exchange between plasma membrane and Golgi.

The protein localises to the cell membrane. Its subcellular location is the golgi apparatus membrane. The catalysed reaction is GTP + H2O = GDP + phosphate + H(+). Its activity is regulated as follows. Alternates between an inactive form bound to GDP and an active form bound to GTP. Activated by a guanine nucleotide-exchange factor (GEF) and inactivated by a GTPase-activating protein (GAP). Functionally, ras proteins bind GDP/GTP and possess intrinsic GTPase activity. The polypeptide is GTPase HRas (HRAS) (Gallus gallus (Chicken)).